Consider the following 758-residue polypeptide: Vesicular-fusion protein SEC18 (758 aa).

Ser226 is modified (phosphoserine). ATP-binding positions include 281–288 and 564–571; these read GPPGTGKT and GPAGSGKT.

The protein belongs to the AAA ATPase family. In terms of assembly, homohexamer. Binds to SEC17.

It is found in the cytoplasm. In terms of biological role, required for vesicle-mediated transport. Catalyzes the fusion of transport vesicles within the Golgi cisternae. Is also required for transport from the endoplasmic reticulum to the Golgi stack. Seems to function as a fusion protein required for the delivery of cargo proteins to all compartments of the Golgi stack independent of vesicle origin. The sequence is that of Vesicular-fusion protein SEC18 (SEC18) from Saccharomyces cerevisiae (strain ATCC 204508 / S288c) (Baker's yeast).